The following is a 381-amino-acid chain: tRNA-specific 2-thiouridylase MnmA (381 aa).

Residues 9–16 (GMSGGVDS) and M35 contribute to the ATP site. An interaction with target base in tRNA region spans residues 95–97 (NPD). The active-site Nucleophile is C100. Residues C100 and C196 are joined by a disulfide bond. ATP is bound at residue G124. The interval 146 to 148 (KDQ) is interaction with tRNA. The active-site Cysteine persulfide intermediate is the C196. The tract at residues 308-309 (RY) is interaction with tRNA.

The protein belongs to the MnmA/TRMU family.

It is found in the cytoplasm. It catalyses the reaction S-sulfanyl-L-cysteinyl-[protein] + uridine(34) in tRNA + AH2 + ATP = 2-thiouridine(34) in tRNA + L-cysteinyl-[protein] + A + AMP + diphosphate + H(+). Functionally, catalyzes the 2-thiolation of uridine at the wobble position (U34) of tRNA, leading to the formation of s(2)U34. The chain is tRNA-specific 2-thiouridylase MnmA from Paraburkholderia xenovorans (strain LB400).